We begin with the raw amino-acid sequence, 100 residues long: Aspartyl/glutamyl-tRNA(Asn/Gln) amidotransferase subunit C (100 aa).

It belongs to the GatC family. As to quaternary structure, heterotrimer of A, B and C subunits.

The catalysed reaction is L-glutamyl-tRNA(Gln) + L-glutamine + ATP + H2O = L-glutaminyl-tRNA(Gln) + L-glutamate + ADP + phosphate + H(+). The enzyme catalyses L-aspartyl-tRNA(Asn) + L-glutamine + ATP + H2O = L-asparaginyl-tRNA(Asn) + L-glutamate + ADP + phosphate + 2 H(+). Its function is as follows. Allows the formation of correctly charged Asn-tRNA(Asn) or Gln-tRNA(Gln) through the transamidation of misacylated Asp-tRNA(Asn) or Glu-tRNA(Gln) in organisms which lack either or both of asparaginyl-tRNA or glutaminyl-tRNA synthetases. The reaction takes place in the presence of glutamine and ATP through an activated phospho-Asp-tRNA(Asn) or phospho-Glu-tRNA(Gln). The chain is Aspartyl/glutamyl-tRNA(Asn/Gln) amidotransferase subunit C from Streptococcus gordonii (strain Challis / ATCC 35105 / BCRC 15272 / CH1 / DL1 / V288).